The primary structure comprises 384 residues: L-type lectin-like domain-containing protein C4F6.05c (384 aa).

The N-terminal stretch at 1–19 (MKFCSLFHVLSFCCTLAYA) is a signal peptide. Positions 20–224 (VPKSQFLQLH…DLVALSNLNI (205 aa)) constitute an L-type lectin-like domain. At 20-353 (VPKSQFLQLH…AMGNAYSPYN (334 aa)) the chain is on the extracellular side. The disordered stretch occupies residues 227-251 (PDTSNNENLNPTSNTKQSVGDNTSP). A helical transmembrane segment spans residues 354–374 (LTNFMVFLLLGAIVSYGIMLV). Topologically, residues 375–384 (RRDRRRHKYL) are cytoplasmic.

Its subcellular location is the membrane. The protein resides in the endoplasmic reticulum. It is found in the golgi apparatus. The polypeptide is L-type lectin-like domain-containing protein C4F6.05c (Schizosaccharomyces pombe (strain 972 / ATCC 24843) (Fission yeast)).